The sequence spans 370 residues: Endopolygalacturonase A (370 aa).

The first 19 residues, 1 to 19 (MPSAKPLFCLATLAGAALA), serve as a signal peptide directing secretion. Positions 20-32 (APAPSRATDFNKR) are excised as a propeptide. Cys-35 and Cys-50 are oxidised to a cystine. PbH1 repeat units lie at residues 162 to 192 (SDNLVIEDVTIDNSDGDSEGGHNTDGFDISE), 193 to 214 (STYITITGATVKNQGDCVAINS), 215 to 235 (GENIYFSGGTCSGGHGLSIGS), 244 to 265 (VKNVTFIDSTVSDSENGVRIKT), 273 to 295 (VEDITYSNIQLSGISDYGIVIEQ), and 307 to 352 (SNGV…DITG). Residues Cys-209 and Cys-225 are joined by a disulfide bond. His-229 is an active-site residue. Asn-246 is a glycosylation site (N-linked (GlcNAc...) asparagine). Cystine bridges form between Cys-335–Cys-340 and Cys-359–Cys-368.

Belongs to the glycosyl hydrolase 28 family.

The protein resides in the secreted. The catalysed reaction is (1,4-alpha-D-galacturonosyl)n+m + H2O = (1,4-alpha-D-galacturonosyl)n + (1,4-alpha-D-galacturonosyl)m.. Functionally, involved in maceration and soft-rotting of plant tissue. Hydrolyzes the 1,4-alpha glycosidic bonds of de-esterified pectate in the smooth region of the plant cell wall. The polypeptide is Endopolygalacturonase A (pgaA) (Aspergillus awamori (Black koji mold)).